Here is a 99-residue protein sequence, read N- to C-terminus: Large ribosomal subunit protein bL28 (99 aa).

This sequence belongs to the bacterial ribosomal protein bL28 family.

This chain is Large ribosomal subunit protein bL28, found in Rhodospirillum rubrum (strain ATCC 11170 / ATH 1.1.1 / DSM 467 / LMG 4362 / NCIMB 8255 / S1).